Here is a 207-residue protein sequence, read N- to C-terminus: Oligoribonuclease (207 aa).

Positions 8 to 172 constitute an Exonuclease domain; that stretch reads LVWIDCEMTG…ADILESVREL (165 aa). Y129 is an active-site residue.

This sequence belongs to the oligoribonuclease family.

It localises to the cytoplasm. Functionally, 3'-to-5' exoribonuclease specific for small oligoribonucleotides. The sequence is that of Oligoribonuclease from Leifsonia xyli subsp. xyli (strain CTCB07).